Reading from the N-terminus, the 559-residue chain is Acetylcholinesterase-1 (559 aa).

An N-terminal signal peptide occupies residues 1–21 (MMLPRCFVTVLLMSSVLYIGG). An intrachain disulfide couples Cys92 to Cys114. 142 to 143 (GG) contacts substrate. Ser223 functions as the Acyl-ester intermediate in the catalytic mechanism. Ser223 is subject to Phosphoserine. A disulfide bridge connects residues Cys276 and Cys293. Residues Asn278 and Asn342 are each glycosylated (N-linked (GlcNAc...) asparagine). Glu354 acts as the Charge relay system in catalysis. Asn374 is a glycosylation site (N-linked (GlcNAc...) asparagine). Cys432 and Cys550 are joined by a disulfide. His471 functions as the Charge relay system in the catalytic mechanism.

The protein belongs to the type-B carboxylesterase/lipase family. In terms of tissue distribution, expressed by the venom gland.

The protein localises to the secreted. The catalysed reaction is acetylcholine + H2O = choline + acetate + H(+). In terms of biological role, terminates signal transduction at the neuromuscular junction by rapid hydrolysis of the acetylcholine released into the synaptic cleft. The sequence is that of Acetylcholinesterase-1 from Trittame loki (Brush-footed trapdoor spider).